A 512-amino-acid chain; its full sequence is Cobyric acid synthase (512 aa).

In terms of domain architecture, GATase cobBQ-type spans 254 to 455; sequence EIDIAVVKLP…LHGLFDNKAL (202 aa). C335 serves as the catalytic Nucleophile. Residue H447 is part of the active site.

Belongs to the CobB/CobQ family. CobQ subfamily.

It functions in the pathway cofactor biosynthesis; adenosylcobalamin biosynthesis. In terms of biological role, catalyzes amidations at positions B, D, E, and G on adenosylcobyrinic A,C-diamide. NH(2) groups are provided by glutamine, and one molecule of ATP is hydrogenolyzed for each amidation. The chain is Cobyric acid synthase from Desulforamulus reducens (strain ATCC BAA-1160 / DSM 100696 / MI-1) (Desulfotomaculum reducens).